A 354-amino-acid polypeptide reads, in one-letter code: Protein RecA (354 aa).

67–74 contacts ATP; the sequence is GPESSGKT.

It belongs to the RecA family.

It localises to the cytoplasm. In terms of biological role, can catalyze the hydrolysis of ATP in the presence of single-stranded DNA, the ATP-dependent uptake of single-stranded DNA by duplex DNA, and the ATP-dependent hybridization of homologous single-stranded DNAs. It interacts with LexA causing its activation and leading to its autocatalytic cleavage. This Yersinia enterocolitica serotype O:8 / biotype 1B (strain NCTC 13174 / 8081) protein is Protein RecA.